Here is a 338-residue protein sequence, read N- to C-terminus: Phenylalanine--tRNA ligase alpha subunit (338 aa).

A Mg(2+)-binding site is contributed by Glu253.

The protein belongs to the class-II aminoacyl-tRNA synthetase family. Phe-tRNA synthetase alpha subunit type 1 subfamily. Tetramer of two alpha and two beta subunits. Mg(2+) is required as a cofactor.

Its subcellular location is the cytoplasm. It catalyses the reaction tRNA(Phe) + L-phenylalanine + ATP = L-phenylalanyl-tRNA(Phe) + AMP + diphosphate + H(+). The polypeptide is Phenylalanine--tRNA ligase alpha subunit (Syntrophus aciditrophicus (strain SB)).